Here is a 196-residue protein sequence, read N- to C-terminus: Imidazoleglycerol-phosphate dehydratase (196 aa).

It belongs to the imidazoleglycerol-phosphate dehydratase family.

The protein localises to the cytoplasm. It catalyses the reaction D-erythro-1-(imidazol-4-yl)glycerol 3-phosphate = 3-(imidazol-4-yl)-2-oxopropyl phosphate + H2O. Its pathway is amino-acid biosynthesis; L-histidine biosynthesis; L-histidine from 5-phospho-alpha-D-ribose 1-diphosphate: step 6/9. The sequence is that of Imidazoleglycerol-phosphate dehydratase from Caulobacter vibrioides (strain ATCC 19089 / CIP 103742 / CB 15) (Caulobacter crescentus).